Here is an 873-residue protein sequence, read N- to C-terminus: Alanine--tRNA ligase (873 aa).

His562, His566, Cys663, and His667 together coordinate Zn(2+).

Belongs to the class-II aminoacyl-tRNA synthetase family. Zn(2+) serves as cofactor.

It is found in the cytoplasm. It carries out the reaction tRNA(Ala) + L-alanine + ATP = L-alanyl-tRNA(Ala) + AMP + diphosphate. In terms of biological role, catalyzes the attachment of alanine to tRNA(Ala) in a two-step reaction: alanine is first activated by ATP to form Ala-AMP and then transferred to the acceptor end of tRNA(Ala). Also edits incorrectly charged Ser-tRNA(Ala) and Gly-tRNA(Ala) via its editing domain. In Bordetella avium (strain 197N), this protein is Alanine--tRNA ligase.